We begin with the raw amino-acid sequence, 660 residues long: Histone deacetylase 5 (660 aa).

Ala-2 is modified (N-acetylalanine). Positions 26–349 (KVGLIYDETM…SLACVQVLLE (324 aa)) are histone deacetylase. The active-site Proton donor/acceptor is His-158. Positions 198, 200, and 291 each coordinate Zn(2+).

Belongs to the histone deacetylase family. HD type 2 subfamily. Interacts with HDA6. It depends on Zn(2+) as a cofactor. As to expression, expressed in stems, leaves, flowers, siliques and mature seeds.

It is found in the nucleus. The protein resides in the cytoplasm. The catalysed reaction is N(6)-acetyl-L-lysyl-[histone] + H2O = L-lysyl-[histone] + acetate. Its activity is regulated as follows. Inhibited by trichostatin A (TSA), a well-known histone deacetylase inhibitor. Its function is as follows. Responsible for the deacetylation of lysine residues on the N-terminal part of the core histones (H2A, H2B, H3 and H4). Histone deacetylation gives a tag for epigenetic repression and plays an important role in transcriptional regulation, cell cycle progression and developmental events. Histone deacetylases act via the formation of large multiprotein complexes. Involved in the regulation of flowering time by repressing FLC and AGL27/MAF1 expression. Forms a histone deacetylase complex with HDA6, FLD and MSI4/FVE that represses FLC gene expression to control flowering time. Unlike its tandem duplication HDA18, HDA5 does not seem to be required for the cellular patterning in the root epidermis. The chain is Histone deacetylase 5 from Arabidopsis thaliana (Mouse-ear cress).